Consider the following 231-residue polypeptide: Flagellar L-ring protein (231 aa).

The first 18 residues, 1–18 (MNRYVSVLALSGIAVLAG), serve as a signal peptide directing secretion. The N-palmitoyl cysteine moiety is linked to residue cysteine 19. Cysteine 19 carries the S-diacylglycerol cysteine lipid modification.

The protein belongs to the FlgH family. The basal body constitutes a major portion of the flagellar organelle and consists of four rings (L,P,S, and M) mounted on a central rod.

The protein resides in the cell outer membrane. It is found in the bacterial flagellum basal body. Assembles around the rod to form the L-ring and probably protects the motor/basal body from shearing forces during rotation. The protein is Flagellar L-ring protein of Pseudomonas fluorescens (strain SBW25).